A 212-amino-acid polypeptide reads, in one-letter code: MQLSLTQARTWKGLFLLVSCMFLWVYVTATRYDRKSNEEIYDNLLSSSRHIHRVAKKMYKILDSKLTEGVCFRNKNTKMCQTISTHSVKKNEDLLKVIINVSNFWTYPLKMLIPAVLTHLDSDDGMMTRAVELNYGNKVVLEGAKALLSRIQPGIEENNEPDRWSDLRELRSSKKSKHLLAFCKFFYCLRKDTKMVTCYLRALKHGKIKTIC.

The first 29 residues, 1 to 29 (MQLSLTQARTWKGLFLLVSCMFLWVYVTA), serve as a signal peptide directing secretion. A disulfide bridge links Cys80 with Cys188. Asn100 is a glycosylation site (N-linked (GlcNAc...) asparagine).

This sequence belongs to the somatotropin/prolactin family. As to expression, expressed exclusively in decidua.

It localises to the secreted. This chain is Prolactin-3C1 (Prl3c1), found in Mus musculus (Mouse).